The sequence spans 277 residues: Indole-3-glycerol phosphate synthase (277 aa).

This sequence belongs to the TrpC family.

It carries out the reaction 1-(2-carboxyphenylamino)-1-deoxy-D-ribulose 5-phosphate + H(+) = (1S,2R)-1-C-(indol-3-yl)glycerol 3-phosphate + CO2 + H2O. It functions in the pathway amino-acid biosynthesis; L-tryptophan biosynthesis; L-tryptophan from chorismate: step 4/5. In Pseudomonas putida (strain GB-1), this protein is Indole-3-glycerol phosphate synthase.